The primary structure comprises 176 residues: Pectinesterase inhibitor 1 (176 aa).

Residues 1–25 form the signal peptide; it reads MAANLRNNAFLSSLMFLLLIGSSYA. 2 cysteine pairs are disulfide-bonded: Cys-35/Cys-44 and Cys-98/Cys-138. An N-linked (GlcNAc...) asparagine glycan is attached at Asn-154.

It belongs to the PMEI family. Monomer and homodimer. Interacts in vitro with PPME1. In terms of tissue distribution, highest expression in flowers. Expressed exclusively at the pollen tube tip.

The protein resides in the secreted. It is found in the extracellular space. It localises to the apoplast. Its function is as follows. Inhibits pectin methylesterase (PME) from flowers and siliques. Inhibits PME from leaves. The chain is Pectinesterase inhibitor 1 from Arabidopsis thaliana (Mouse-ear cress).